Consider the following 620-residue polypeptide: Proline--tRNA ligase (620 aa).

Belongs to the class-II aminoacyl-tRNA synthetase family. ProS type 1 subfamily. In terms of assembly, homodimer.

It localises to the cytoplasm. It catalyses the reaction tRNA(Pro) + L-proline + ATP = L-prolyl-tRNA(Pro) + AMP + diphosphate. Catalyzes the attachment of proline to tRNA(Pro) in a two-step reaction: proline is first activated by ATP to form Pro-AMP and then transferred to the acceptor end of tRNA(Pro). As ProRS can inadvertently accommodate and process non-cognate amino acids such as alanine and cysteine, to avoid such errors it has two additional distinct editing activities against alanine. One activity is designated as 'pretransfer' editing and involves the tRNA(Pro)-independent hydrolysis of activated Ala-AMP. The other activity is designated 'posttransfer' editing and involves deacylation of mischarged Ala-tRNA(Pro). The misacylated Cys-tRNA(Pro) is not edited by ProRS. The protein is Proline--tRNA ligase of Streptococcus thermophilus (strain ATCC BAA-491 / LMD-9).